Here is a 345-residue protein sequence, read N- to C-terminus: Uroporphyrinogen decarboxylase (345 aa).

Residues 27–31, Phe-46, Asp-76, Tyr-152, Ser-207, and His-320 contribute to the substrate site; that span reads RQAGR.

Belongs to the uroporphyrinogen decarboxylase family. As to quaternary structure, homodimer.

The protein localises to the cytoplasm. The enzyme catalyses uroporphyrinogen III + 4 H(+) = coproporphyrinogen III + 4 CO2. Its pathway is porphyrin-containing compound metabolism; protoporphyrin-IX biosynthesis; coproporphyrinogen-III from 5-aminolevulinate: step 4/4. Catalyzes the decarboxylation of four acetate groups of uroporphyrinogen-III to yield coproporphyrinogen-III. This chain is Uroporphyrinogen decarboxylase, found in Geobacillus thermodenitrificans (strain NG80-2).